The sequence spans 481 residues: Probable glycine dehydrogenase (decarboxylating) subunit 2 (481 aa).

Positions 1-26 (MVIFEKTRGKNSPSVMPSKKGDVSNI) are disordered. Position 263 is an N6-(pyridoxal phosphate)lysine (lysine 263).

Belongs to the GcvP family. C-terminal subunit subfamily. As to quaternary structure, the glycine cleavage system is composed of four proteins: P, T, L and H. In this organism, the P 'protein' is a heterodimer of two subunits. Requires pyridoxal 5'-phosphate as cofactor.

The catalysed reaction is N(6)-[(R)-lipoyl]-L-lysyl-[glycine-cleavage complex H protein] + glycine + H(+) = N(6)-[(R)-S(8)-aminomethyldihydrolipoyl]-L-lysyl-[glycine-cleavage complex H protein] + CO2. Its function is as follows. The glycine cleavage system catalyzes the degradation of glycine. The P protein binds the alpha-amino group of glycine through its pyridoxal phosphate cofactor; CO(2) is released and the remaining methylamine moiety is then transferred to the lipoamide cofactor of the H protein. The protein is Probable glycine dehydrogenase (decarboxylating) subunit 2 of Francisella tularensis subsp. mediasiatica (strain FSC147).